The sequence spans 297 residues: Undecaprenyl-diphosphatase (297 aa).

A run of 7 helical transmembrane segments spans residues 58 to 78, 103 to 123, 138 to 158, 168 to 188, 208 to 228, 243 to 263, and 274 to 294; these read PGVA…LSYF, AQMG…GLLI, LAAI…AEQL, LRLA…IPGV, AARF…LVEL, VLAI…AWLL, and FVVY…TGTL.

It belongs to the UppP family.

It is found in the cell inner membrane. It carries out the reaction di-trans,octa-cis-undecaprenyl diphosphate + H2O = di-trans,octa-cis-undecaprenyl phosphate + phosphate + H(+). In terms of biological role, catalyzes the dephosphorylation of undecaprenyl diphosphate (UPP). Confers resistance to bacitracin. This chain is Undecaprenyl-diphosphatase, found in Synechococcus sp. (strain ATCC 27144 / PCC 6301 / SAUG 1402/1) (Anacystis nidulans).